We begin with the raw amino-acid sequence, 700 residues long: Methionine synthase reductase (700 aa).

The Flavodoxin-like domain occupies Phe4 to Trp147. FMN is bound by residues Thr10–Gln14 and Leu93–Tyr124. The hinge stretch occupies residues Thr168–Pro247. 2 positions are modified to phosphoserine: Ser173 and Ser190. An FAD-binding FR-type domain is found at Asp272–Pro534. Residue Lys292 coordinates NADP(+). FAD is bound by residues Arg452–Ser455 and Gly488–Thr491. NADP(+) contacts are provided by residues Ser611–Arg612, Tyr626–Gln628, and Asp661. Trp699 contacts FAD.

Forms a multiprotein complex with MMACHC, MMADHC and MTR. FAD is required as a cofactor. FMN serves as cofactor.

Its subcellular location is the cytoplasm. The catalysed reaction is 2 methylcob(III)alamin-[methionine synthase] + 2 S-adenosyl-L-homocysteine + NADP(+) + H(+) = 2 cob(II)alamin-[methionine synthase] + 2 S-adenosyl-L-methionine + NADPH. It carries out the reaction 2 cob(II)alamin + A + 2 H2O + 2 H(+) = 2 aquacob(III)alamin + AH2. Functionally, key enzyme in methionine and folate homeostasis responsible for the reactivation of methionine synthase (MTR/MS) activity by catalyzing the reductive methylation of MTR-bound cob(II)alamin. Cobalamin (vitamin B12) forms a complex with MTR to serve as an intermediary in methyl transfer reactions that cycles between MTR-bound methylcob(III)alamin and MTR bound-cob(I)alamin forms, and occasional oxidative escape of the cob(I)alamin intermediate during the catalytic cycle leads to the inactive cob(II)alamin species. The processing of cobalamin in the cytosol occurs in a multiprotein complex composed of at least MMACHC, MMADHC, MTRR and MTR which may contribute to shuttle safely and efficiently cobalamin towards MTR in order to produce methionine. Also necessary for the utilization of methyl groups from the folate cycle, thereby affecting transgenerational epigenetic inheritance. Also acts as a molecular chaperone for methionine synthase by stabilizing apoMTR and incorporating methylcob(III)alamin into apoMTR to form the holoenzyme. Also serves as an aquacob(III)alamin reductase by reducing aquacob(III)alamin to cob(II)alamin; this reduction leads to stimulation of the conversion of apoMTR and aquacob(III)alamin to MTR holoenzyme. The chain is Methionine synthase reductase (Mtrr) from Rattus norvegicus (Rat).